A 180-amino-acid polypeptide reads, in one-letter code: Protein GrpE (180 aa).

It belongs to the GrpE family. Homodimer.

Its subcellular location is the cytoplasm. Its function is as follows. Participates actively in the response to hyperosmotic and heat shock by preventing the aggregation of stress-denatured proteins, in association with DnaK and GrpE. It is the nucleotide exchange factor for DnaK and may function as a thermosensor. Unfolded proteins bind initially to DnaJ; upon interaction with the DnaJ-bound protein, DnaK hydrolyzes its bound ATP, resulting in the formation of a stable complex. GrpE releases ADP from DnaK; ATP binding to DnaK triggers the release of the substrate protein, thus completing the reaction cycle. Several rounds of ATP-dependent interactions between DnaJ, DnaK and GrpE are required for fully efficient folding. The polypeptide is Protein GrpE (Picrophilus torridus (strain ATCC 700027 / DSM 9790 / JCM 10055 / NBRC 100828 / KAW 2/3)).